The chain runs to 363 residues: Pyrimidine monooxygenase RutA (363 aa).

FMN-binding positions include 49–50 (IK), asparagine 115, glutamate 124, 140–141 (RY), and serine 190.

Belongs to the NtaA/SnaA/DszA monooxygenase family. RutA subfamily.

The enzyme catalyses uracil + FMNH2 + NADH + O2 = (Z)-3-ureidoacrylate + FMN + NAD(+) + H2O + H(+). The catalysed reaction is thymine + FMNH2 + NADH + O2 = (Z)-2-methylureidoacrylate + FMN + NAD(+) + H2O + H(+). In terms of biological role, catalyzes the pyrimidine ring opening between N-3 and C-4 by an unusual flavin hydroperoxide-catalyzed mechanism, adding oxygen atoms in the process to yield ureidoacrylate peracid, that immediately reacts with FMN forming ureidoacrylate and FMN-N(5)-oxide. The FMN-N(5)-oxide reacts spontaneously with NADH to produce FMN. Requires the flavin reductase RutF to regenerate FMN in vivo. In Klebsiella pneumoniae subsp. pneumoniae (strain ATCC 700721 / MGH 78578), this protein is Pyrimidine monooxygenase RutA.